The primary structure comprises 346 residues: Hydroxycarboxylic acid receptor 1 (346 aa).

Residues 1 to 21 (MYNGSCCRIEGDTISQVMPPL) are Extracellular-facing. Asn-3 is a glycosylation site (N-linked (GlcNAc...) asparagine). A helical membrane pass occupies residues 22-42 (LIVAFVLGALGNGVALCGFCF). The Cytoplasmic segment spans residues 43–49 (HMKTWKP). The chain crosses the membrane as a helical span at residues 50–70 (STVYLFNLAVADFLLMICLPF). Over 71–89 (RTDYYLRRRHWAFGDIPCR) the chain is Extracellular. The cysteines at positions 88 and 165 are disulfide-linked. A helical transmembrane segment spans residues 90-110 (VGLFTLAMNRAGSIVFLTVVA). Topologically, residues 111–130 (ADRYFKVVHPHHAVNTISTR) are cytoplasmic. The chain crosses the membrane as a helical span at residues 131 to 151 (VAAGIVCTLWALVILGTVYLL). The Extracellular portion of the chain corresponds to 152 to 182 (LENHLCVQETAVSCESFIMESANGWHDIMFQ). The helical transmembrane segment at 183-203 (LEFFMPLGIILFCSFKIVWSL) threads the bilayer. The Cytoplasmic portion of the chain corresponds to 204–220 (RRRQQLARQARMKKATR). The helical transmembrane segment at 221-241 (FIMVVAIVFITCYLPSVSARL) threads the bilayer. The Extracellular segment spans residues 242 to 261 (YFLWTVPSSACDPSVHGALH). A helical membrane pass occupies residues 262–281 (ITLSFTYMNSMLDPLVYYFS). Residues 282–346 (SPSFPKFYNK…QWDPHIVEWH (65 aa)) are Cytoplasmic-facing.

This sequence belongs to the G-protein coupled receptor 1 family. As to expression, expressed abundantly in brown and white fat. It also detectable at lower levels in liver, kidney, skeletal muscle, brain and pituitary. Not detected in frontal, temporal and occipital lobes of the cortex, basal forebrain, caudate nucleus, nucleus accumbens and hippocampus.

Its subcellular location is the cell membrane. Acts as a receptor for L-lactate and mediates its anti-lipolytic effect through a G(i)-protein-mediated pathway. The protein is Hydroxycarboxylic acid receptor 1 (HCAR1) of Homo sapiens (Human).